Consider the following 480-residue polypeptide: Probable pectin lyase F-2 (480 aa).

The signal sequence occupies residues 1-25 (MTLIRTVLMAAALLGASAHAQGVVG). Cys83 and Cys106 are oxidised to a cystine. N-linked (GlcNAc...) asparagine glycosylation occurs at Asn111. Residue Arg256 is part of the active site. Residues Cys322 and Cys330 are joined by a disulfide bond. Over residues 386 to 401 (SSSAIPSSTPAPSSSA) the composition is skewed to low complexity. Residues 386–436 (SSSAIPSSTPAPSSSALAKRHGGHDRHGLGHIPHLTEGGPGAWHTPGPAPS) form a disordered region.

Belongs to the polysaccharide lyase 1 family.

It is found in the secreted. It carries out the reaction Eliminative cleavage of (1-&gt;4)-alpha-D-galacturonan methyl ester to give oligosaccharides with 4-deoxy-6-O-methyl-alpha-D-galact-4-enuronosyl groups at their non-reducing ends.. In terms of biological role, pectinolytic enzymes consist of four classes of enzymes: pectin lyase, polygalacturonase, pectin methylesterase and rhamnogalacturonase. Among pectinolytic enzymes, pectin lyase is the most important in depolymerization of pectin, since it cleaves internal glycosidic bonds of highly methylated pectins. The protein is Probable pectin lyase F-2 (pelF-2) of Aspergillus terreus (strain NIH 2624 / FGSC A1156).